We begin with the raw amino-acid sequence, 579 residues long: DNA ligase 1 (579 aa).

Glutamate 244 serves as a coordination point for ATP. Lysine 246 serves as the catalytic N6-AMP-lysine intermediate. The ATP site is built by arginine 251, arginine 266, glutamate 296, phenylalanine 342, arginine 419, and lysine 425.

It belongs to the ATP-dependent DNA ligase family. Mg(2+) serves as cofactor.

It carries out the reaction ATP + (deoxyribonucleotide)n-3'-hydroxyl + 5'-phospho-(deoxyribonucleotide)m = (deoxyribonucleotide)n+m + AMP + diphosphate.. DNA ligase that seals nicks in double-stranded DNA during DNA replication, DNA recombination and DNA repair. This Methanosarcina mazei (strain ATCC BAA-159 / DSM 3647 / Goe1 / Go1 / JCM 11833 / OCM 88) (Methanosarcina frisia) protein is DNA ligase 1.